Reading from the N-terminus, the 301-residue chain is Fructokinase (301 aa).

Zn(2+)-binding residues include histidine 165, cysteine 181, histidine 184, and cysteine 187.

The protein belongs to the ROK (NagC/XylR) family. Mg(2+) is required as a cofactor.

It carries out the reaction D-fructose + ATP = D-fructose 6-phosphate + ADP + H(+). Inhibition by zinc ions. This is Fructokinase (frk) from Zymomonas mobilis subsp. mobilis (strain ATCC 31821 / ZM4 / CP4).